The chain runs to 326 residues: Transcription factor MYB16 (326 aa).

HTH myb-type domains are found at residues 9-61 (KLGL…TNYL) and 62-116 (RPDI…KKRL). 2 consecutive DNA-binding regions (H-T-H motif) follow at residues 37–61 (WRSL…TNYL) and 89–112 (WSAI…NTHL). Disordered regions lie at residues 197–217 (NWTT…STVS) and 280–299 (DRSF…GGDC). Polar residues predominate over residues 208 to 217 (QLESPTSTVS). The span at 280–290 (DRSFSGDKNET) shows a compositional bias: basic and acidic residues.

In terms of tissue distribution, expressed in trichomes, epidermis and mesophyll cells of young leaves, stems, petals, sepals, carpels and stamens.

The protein localises to the nucleus. Its function is as follows. Involved in the control of epidermal cell morphogenesis in petals. Promotes unidirectional cell expansion once outgrowth has been initiated. Coordinately with WIN1/SHN1, participates in the regulation of cuticle biosynthesis and wax accumulation in reproductive organs and trichomes. Functions in cuticle nanoridge formation in petals and stamens, and in morphogenesis of petal conical cells and trichomes. Functions as a major regulator of cuticle formation in vegetative organs by regulating the cuticle biosynthesis genes CYP86A8/LCR and CER1. In Arabidopsis thaliana (Mouse-ear cress), this protein is Transcription factor MYB16.